A 246-amino-acid chain; its full sequence is Myelin protein P0 (246 aa).

Positions 1-27 are cleaved as a signal peptide; sequence MFRDLKPAYLFCCSVLYAFSVLRPSQG. Residues 28–143 enclose the Ig-like V-type domain; sequence ISVSTHHNLH…VGTSSDVHLT (116 aa). The Extracellular segment spans residues 28 to 150; the sequence is ISVSTHHNLH…HLTVYDKIPP (123 aa). A disulfide bridge connects residues Cys48 and Cys125. Asn120 is a glycosylation site (N-linked (GlcNAc...) (complex) asparagine). Residues 151 to 178 traverse the membrane as a helical segment; sequence VGAGVVSGAIIGTFLGIILLIVGGLYLF. Over 179–246 the chain is Cytoplasmic; it reads RYIVRRRARS…KLSESKRDKK (68 aa). The interval 200-246 is disordered; sequence AERGKVSGKAGTVSKGPVLYATLDQSKSGKGASEKKSKLSESKRDKK. Residues 231–246 are compositionally biased toward basic and acidic residues; sequence ASEKKSKLSESKRDKK.

Belongs to the myelin P0 protein family. In terms of processing, N-glycan is sulfated. In terms of tissue distribution, found only in peripheral nervous system Schwann cells.

The protein localises to the cell membrane. Creation of an extracellular membrane face which guides the wrapping process and ultimately compacts adjacent lamellae. The chain is Myelin protein P0 (mpz) from Heterodontus francisci (Horn shark).